Reading from the N-terminus, the 355-residue chain is Histidinol-phosphate aminotransferase (355 aa).

The residue at position 211 (Lys-211) is an N6-(pyridoxal phosphate)lysine.

The protein belongs to the class-II pyridoxal-phosphate-dependent aminotransferase family. Histidinol-phosphate aminotransferase subfamily. As to quaternary structure, homodimer. Pyridoxal 5'-phosphate serves as cofactor.

It carries out the reaction L-histidinol phosphate + 2-oxoglutarate = 3-(imidazol-4-yl)-2-oxopropyl phosphate + L-glutamate. It participates in amino-acid biosynthesis; L-histidine biosynthesis; L-histidine from 5-phospho-alpha-D-ribose 1-diphosphate: step 7/9. The polypeptide is Histidinol-phosphate aminotransferase (Aeromonas salmonicida (strain A449)).